The chain runs to 640 residues: Probable inactive receptor kinase At3g08680 (640 aa).

The signal sequence occupies residues 1-22 (MMKIIAAFLFLLVTTFVSRCLS). LRR repeat units follow at residues 93 to 115 (ALRIISLRSNHLQGNIPSVILSL), 117 to 138 (FIRSLYFHENNFSGTIPPVLSH), 139 to 162 (RLVNLDLSANSLSGNIPTSLQNLT), 163 to 185 (QLTDLSLQNNSLSGPIPNLPPRL), and 186 to 206 (KYLNLSFNNLNGSVPSSVKSF). The disordered stretch occupies residues 222–249 (LTPCPENTTAPSPSPTTPTEGPGTTNIG). Low complexity predominate over residues 226–247 (PENTTAPSPSPTTPTEGPGTTN). Residues 260–280 (GAIVGIAVGGSVLLFIILAII) traverse the membrane as a helical segment. Residues 289–315 (DGGQDSTAVPKAKPGRSDNKAEEFGSG) form a disordered region. One can recognise a Protein kinase domain in the interval 341–614 (RASAEVLGKG…EEVVNMMEEI (274 aa)). Ser343 carries the post-translational modification Phosphoserine. Residue 347-355 (LGKGSYGTT) coordinates ATP. The residue at position 364 (Thr364) is a Phosphothreonine. Lys369 lines the ATP pocket. Phosphothreonine is present on residues Thr441, Thr514, and Thr564. Positions 612–640 (EEIRPSGSGPGSGNRASSPEMIRSSDSPV) are disordered.

This sequence belongs to the protein kinase superfamily. Tyr protein kinase family.

The protein localises to the membrane. In Arabidopsis thaliana (Mouse-ear cress), this protein is Probable inactive receptor kinase At3g08680.